The following is a 354-amino-acid chain: Homeobox protein Nkx-2.4 (354 aa).

Residues R189–A248 constitute a DNA-binding region (homeobox). Residues R246–L329 form a disordered region. The segment covering G263–P272 has biased composition (pro residues).

This sequence belongs to the NK-2 homeobox family.

It localises to the nucleus. Its function is as follows. Probable transcription factor. The chain is Homeobox protein Nkx-2.4 (NKX2-4) from Homo sapiens (Human).